A 1007-amino-acid chain; its full sequence is Probable beta-galactosidase A (1007 aa).

Positions 1–18 are cleaved as a signal peptide; it reads MKLSSACAIALLAAQAAG. Residues tyrosine 96, asparagine 140, alanine 141, and glutamate 142 each contribute to the substrate site. The N-linked (GlcNAc...) asparagine glycan is linked to asparagine 156. Substrate is bound at residue asparagine 199. The active-site Proton donor is the glutamate 200. Cysteine 205 and cysteine 206 are joined by a disulfide. Tyrosine 260 is a substrate binding site. A disulfide bond links cysteine 266 and cysteine 315. The Nucleophile role is filled by glutamate 298. Residue tyrosine 364 coordinates substrate. N-linked (GlcNAc...) asparagine glycans are attached at residues asparagine 373, asparagine 402, asparagine 422, asparagine 478, asparagine 522, asparagine 622, asparagine 739, asparagine 760, asparagine 777, and asparagine 805. The segment at 862–881 is disordered; the sequence is RQGFHQPEPPSQDWKSSSPL. N-linked (GlcNAc...) asparagine glycosylation occurs at asparagine 914.

Belongs to the glycosyl hydrolase 35 family.

Its subcellular location is the secreted. The catalysed reaction is Hydrolysis of terminal non-reducing beta-D-galactose residues in beta-D-galactosides.. Its function is as follows. Cleaves beta-linked terminal galactosyl residues from gangliosides, glycoproteins, and glycosaminoglycans. The polypeptide is Probable beta-galactosidase A (lacA) (Aspergillus phoenicis (Aspergillus saitoi)).